Consider the following 262-residue polypeptide: ATP synthase subunit a (262 aa).

5 helical membrane-spanning segments follow: residues 26–46 (VHIDTLFFSILAAVIFLFVFS), 86–106 (VAPLALTIFCWVFIMNAIDLI), 130–150 (DISATLGMSICVFFLILFYTI), 204–226 (LIFILIAVMYSANMAIAALGIPL), and 240–260 (LQAFIFMMLTVVYLSIAYNKA).

It belongs to the ATPase A chain family. F-type ATPases have 2 components, CF(1) - the catalytic core - and CF(0) - the membrane proton channel. CF(1) has five subunits: alpha(3), beta(3), gamma(1), delta(1), epsilon(1). CF(0) has three main subunits: a(1), b(2) and c(9-12). The alpha and beta chains form an alternating ring which encloses part of the gamma chain. CF(1) is attached to CF(0) by a central stalk formed by the gamma and epsilon chains, while a peripheral stalk is formed by the delta and b chains.

Its subcellular location is the cell inner membrane. Functionally, key component of the proton channel; it plays a direct role in the translocation of protons across the membrane. The sequence is that of ATP synthase subunit a from Haemophilus influenzae (strain 86-028NP).